The chain runs to 385 residues: Lipid-A-disaccharide synthase 2 (385 aa).

The protein belongs to the LpxB family.

The enzyme catalyses a lipid X + a UDP-2-N,3-O-bis[(3R)-3-hydroxyacyl]-alpha-D-glucosamine = a lipid A disaccharide + UDP + H(+). The protein operates within bacterial outer membrane biogenesis; LPS lipid A biosynthesis. Functionally, condensation of UDP-2,3-diacylglucosamine and 2,3-diacylglucosamine-1-phosphate to form lipid A disaccharide, a precursor of lipid A, a phosphorylated glycolipid that anchors the lipopolysaccharide to the outer membrane of the cell. The polypeptide is Lipid-A-disaccharide synthase 2 (Legionella pneumophila (strain Lens)).